The chain runs to 542 residues: uncharacterized protein (542 aa).

The Extracellular portion of the chain corresponds to 1 to 78 (MSVQKEEYDI…EEKKLVRKMD (78 aa)). A helical membrane pass occupies residues 79–99 (LKIFLWVFIMFAFLDLIRKNI). The Cytoplasmic segment spans residues 100–119 (ARAVSDNFIVDLKMNTNDYN). The chain crosses the membrane as a helical span at residues 120-140 (LGQTVYLVIFLASELPGNLLS). Residues 141-147 (KRFGPER) lie on the Extracellular side of the membrane. Residues 148 to 168 (VIPVQIVLWSVICITQAGLKN) form a helical membrane-spanning segment. Residues 169–176 (RGQFIATR) are Cytoplasmic-facing. Residues 177–197 (CLLGMVQGGFIPDNILYLSYY) traverse the membrane as a helical segment. Topologically, residues 198–208 (YTGAELTFRLS) are extracellular. Residues 209-229 (FFWCAIPLFQILGSLLASGII) traverse the membrane as a helical segment. At 230–241 (EMRGIHNLAGWQ) the chain is on the cytoplasmic side. The helical transmembrane segment at 242 to 262 (YLFIIEGFLSLSVGVASFYLM) threads the bilayer. Residues 263-326 (RRGPTQTGES…TLTEFDLWPL (64 aa)) lie on the Extracellular side of the membrane. A helical transmembrane segment spans residues 327-347 (FIQGITAFISLQTVGSYLSLI). Residues 348 to 359 (LKSLNYSTFLSN) are Cytoplasmic-facing. The chain crosses the membrane as a helical span at residues 360-380 (ILAIPGQALLLINLPLAALLS). Topologically, residues 381-387 (RKLKEKS) are extracellular. Residues 388–408 (LCVGIANVWVLPFIVSLVALP) form a helical membrane-spanning segment. The Cytoplasmic segment spans residues 409-416 (TDTNPWIK). A helical membrane pass occupies residues 417-437 (YILLTGILGLPYTHSILAGWV). Topologically, residues 438-482 (SEISNSVRSRTVGTALYNMSAQVGAIIASNMYRNDDKPYYTRGNK) are extracellular. The helical transmembrane segment at 483–503 (ILLGFTCFNICMAVATKFYYI) threads the bilayer. Topologically, residues 504 to 542 (SRNKYKDRKWNSMTKEEQINYLDTTKDKGMKRLDYRFIH) are cytoplasmic.

Belongs to the major facilitator superfamily. Allantoate permease family.

The protein localises to the membrane. This is an uncharacterized protein from Saccharomyces cerevisiae (strain ATCC 204508 / S288c) (Baker's yeast).